Consider the following 240-residue polypeptide: Protein shisa-5 (240 aa).

A signal peptide spans 1 to 28 (MTAPVPAPRILLPLLLLLLLTPPPGARG). The Extracellular segment spans residues 29–105 (EVCMASRGLS…RPGYNDPMSG (77 aa)). A helical transmembrane segment spans residues 106 to 126 (FGATLAVGLTIFVLSVVTIII). The Cytoplasmic segment spans residues 127 to 240 (CFTCSCCCLY…AYMDAPKAAL (114 aa)).

This sequence belongs to the shisa family. In terms of assembly, interacts with PDCD6; PDCD6 can stabilize SHISA5.

The protein localises to the endoplasmic reticulum membrane. It is found in the nucleus membrane. Can induce apoptosis in a caspase-dependent manner and plays a role in p53/TP53-dependent apoptosis. The sequence is that of Protein shisa-5 (SHISA5) from Homo sapiens (Human).